A 449-amino-acid chain; its full sequence is Ribosomal protein uS12 methylthiotransferase RimO (449 aa).

The region spanning 5–116 (PTIAISHLGC…IVDVVQRVEN (112 aa)) is the MTTase N-terminal domain. Positions 14, 50, 79, 154, 158, and 161 each coordinate [4Fe-4S] cluster. In terms of domain architecture, Radical SAM core spans 140–369 (TTTEGVAYLR…MEVQQPISIK (230 aa)). A TRAM domain is found at 372–438 (QNCIGQTVPV…VYDLYGKTNL (67 aa)).

It belongs to the methylthiotransferase family. RimO subfamily. It depends on [4Fe-4S] cluster as a cofactor.

It is found in the cytoplasm. It carries out the reaction L-aspartate(89)-[ribosomal protein uS12]-hydrogen + (sulfur carrier)-SH + AH2 + 2 S-adenosyl-L-methionine = 3-methylsulfanyl-L-aspartate(89)-[ribosomal protein uS12]-hydrogen + (sulfur carrier)-H + 5'-deoxyadenosine + L-methionine + A + S-adenosyl-L-homocysteine + 2 H(+). Its function is as follows. Catalyzes the methylthiolation of an aspartic acid residue of ribosomal protein uS12. The chain is Ribosomal protein uS12 methylthiotransferase RimO from Rippkaea orientalis (strain PCC 8801 / RF-1) (Cyanothece sp. (strain PCC 8801)).